The primary structure comprises 179 residues: UPF0227 protein Sbal195_2522 (179 aa).

The protein belongs to the UPF0227 family.

The polypeptide is UPF0227 protein Sbal195_2522 (Shewanella baltica (strain OS195)).